A 374-amino-acid polypeptide reads, in one-letter code: Anhydro-N-acetylmuramic acid kinase (374 aa).

Residue 12–19 participates in ATP binding; sequence GTSLDGID.

Belongs to the anhydro-N-acetylmuramic acid kinase family.

The enzyme catalyses 1,6-anhydro-N-acetyl-beta-muramate + ATP + H2O = N-acetyl-D-muramate 6-phosphate + ADP + H(+). It participates in amino-sugar metabolism; 1,6-anhydro-N-acetylmuramate degradation. The protein operates within cell wall biogenesis; peptidoglycan recycling. Catalyzes the specific phosphorylation of 1,6-anhydro-N-acetylmuramic acid (anhMurNAc) with the simultaneous cleavage of the 1,6-anhydro ring, generating MurNAc-6-P. Is required for the utilization of anhMurNAc either imported from the medium or derived from its own cell wall murein, and thus plays a role in cell wall recycling. This Klebsiella pneumoniae subsp. pneumoniae (strain ATCC 700721 / MGH 78578) protein is Anhydro-N-acetylmuramic acid kinase.